Here is a 274-residue protein sequence, read N- to C-terminus: DNA repair protein Rad1 (274 aa).

The protein belongs to the rad1 family. Component of the 9-1-1 checkpoint clamp complex consisting of Rad9 isoform A, Rad1 and Hus1-like; the interaction with Hus1-like is direct. Does not interact directly with Rad9; this interaction is probably mediated by Hus1-like. This complex probably also forms with Rad9 isoform B, however 9-1-1 complex containing Rad9 isoform A localizes to the nuclear periphery. In terms of tissue distribution, expressed in ovary.

The protein localises to the cytoplasm. Its subcellular location is the nucleus. It is found in the nucleus envelope. The polypeptide is DNA repair protein Rad1 (Drosophila melanogaster (Fruit fly)).